We begin with the raw amino-acid sequence, 699 residues long: UV radiation resistance-associated gene protein (699 aa).

Positions methionine 1–proline 10 are enriched in low complexity. Residues methionine 1–proline 24 are disordered. The 127-residue stretch at proline 23–asparagine 149 folds into the C2 domain. The sufficient for interaction with STX7; VTI1B AND STX8 stretch occupies residues histidine 200 to glutamine 269. A coiled-coil region spans residues leucine 224–glutamate 305. Positions isoleucine 270–leucine 442 are sufficient for interaction with VPS16, required for interaction with CEP63. Positions glycine 443–lysine 699 are required for interaction with PRKDC, XRCC6 and XRCC5. The tract at residues glycine 486–glycine 591 is disordered. Residue serine 493 is modified to Phosphoserine. Position 498 is a phosphoserine; by MTOR (serine 498). Phosphoserine is present on serine 508. Position 518 is a phosphothreonine (threonine 518). A Phosphoserine modification is found at serine 522. Polar residues predominate over residues tyrosine 523 to proline 535. Residues threonine 545–aspartate 556 are compositionally biased toward low complexity. Phosphoserine is present on residues serine 549 and serine 550. Over residues phenylalanine 557–aspartate 567 the composition is skewed to basic and acidic residues. Serine 571, serine 582, and serine 689 each carry phosphoserine.

Component of the PI3K (PI3KC3/PI3K-III/class III phosphatidylinositol 3-kinase) complex II (PI3KC3-C2) in which the core composed of the catalytic subunit PIK3C3, the regulatory subunit PIK3R4 and BECN1 is associated with UVRAG; in the complex interacts directly with BECN1. PI3KC3-C2 can associate with further regulatory subunits such as RUBCN and probably SH3GLB1/Bif-1. Interacts with SH3GLB1; UVRAG bridges the interaction to BECN1 indicative for an association with the PI3K complex PI3KC3-C2. Interacts with RINT1. Associates with the NRZ complex under basal conditions and dissociates from it under autophagy conditions to associate with the PI3K complex; these complex associations seem to be mutually exclusive. Interacts with VPS16; VPS11; VPS18; VPS33 (VPS33A or VPS33B) and VPS39; indicative for an association with a class C Vps tethering complex (possibly the HOPS complex). Interacts with RAB7A; RAB7A competes with UVRAG for RUBCN binding. Interacts with STX7, VTI1B, STX8. Interacts with PRKDC, XRCC6 and XRCC5; indicative for an association with the DNA-dependent protein kinase complex DNA-PK. Interacts with CEP63. Directly interacts with FEZ1 and SCOC; the interaction with SCOC is reduced by amino acid starvation, but the complex is stabilized in the presence of FEZ1. Interacts with BECN1P1/BECN2. Interacts with SLAMF1. Interacts with RUBCNL/PACER; promoting targeting of UVRAG to autophagosome. Interacts with WNK1. In terms of processing, phosphorylated at Ser-498 by MTOR under basal conditions; increases the interaction with RUBCN implicated in inhibitory effect of RUBCN on PI3KC3 and decreases interaction with RAB7,A and VPS16 and VPS39 (indicative for a class C Vps complex, possibly the HOPS complex). As to expression, highly expressed in brain, lung, kidney and liver.

The protein resides in the late endosome. Its subcellular location is the lysosome. It localises to the cytoplasmic vesicle. It is found in the autophagosome. The protein localises to the early endosome. The protein resides in the endoplasmic reticulum. Its subcellular location is the midbody. It localises to the chromosome. It is found in the centromere. In terms of biological role, versatile protein that is involved in regulation of different cellular pathways implicated in membrane trafficking. Involved in regulation of the COPI-dependent retrograde transport from Golgi and the endoplasmic reticulum by associating with the NRZ complex; the function is dependent on its binding to phosphatidylinositol 3-phosphate (PtdIns(3)P). During autophagy acts as a regulatory subunit of the alternative PI3K complex II (PI3KC3-C2) that mediates formation of phosphatidylinositol 3-phosphate and is believed to be involved in maturation of autophagosomes and endocytosis. Activates lipid kinase activity of PIK3C3. Involved in the regulation of degradative endocytic trafficking and cytokinesis, and in regulation of ATG9A transport from the Golgi to the autophagosome; the functions seems to implicate its association with PI3KC3-C2. Involved in maturation of autophagosomes and degradative endocytic trafficking independently of BECN1 but depending on its association with a class C Vps complex (possibly the HOPS complex); the association is also proposed to promote autophagosome recruitment and activation of Rab7 and endosome-endosome fusion events. Enhances class C Vps complex (possibly HOPS complex) association with a SNARE complex and promotes fusogenic SNARE complex formation during late endocytic membrane fusion. In case of negative-strand RNA virus infection is required for efficient virus entry, promotes endocytic transport of virions and is implicated in a VAMP8-specific fusogenic SNARE complex assembly. Functionally, involved in maintaining chromosomal stability. Promotes DNA double-strand break (DSB) repair by association with DNA-dependent protein kinase complex DNA-PK and activating it in non-homologous end joining (NHEJ). Required for centrosome stability and proper chromosome segregation. This chain is UV radiation resistance-associated gene protein (UVRAG), found in Homo sapiens (Human).